The primary structure comprises 437 residues: MEINAQKLNEANATVEAKIAKQDVEKKEEKIAKELAKTMNIPGFRKGKVPPAVIKKRYGDKLAQDAEAELVREALDQALEELGIEKEAMLGEPRFAKYEKGEEVIEMVLEIGVRPNIDITGYEEVIPEYEEPQVSDEEVEKRIEELADAMAQFKEIEEDRPAKEGDLVVIDFKGTLEDGSEIEGGSAQNFELRLGSGQFIPGFEEQVEGMKKGETKTIEVTFPEDYPNKELAGKKANFEVTLHTIKEKEKINIDDELAKKMLQKEDATLDELKEEVRKQLKSEKLSKLYNEELKPKLVEALVEKFEFDLPKNIVDQEIDVQLNNKAAQMSEEEIKELRENKEKLEELRKEIEPEAQKSVKATFIVDALAKAEGINVADQEVVQTIYYEALQMGRNPQEILKAYEEQGLLPAIKMAMIEDRLLTHLLSKKNEKQEENA.

The region spanning Gly165–Ile251 is the PPIase FKBP-type domain.

It belongs to the FKBP-type PPIase family. Tig subfamily.

It localises to the cytoplasm. It carries out the reaction [protein]-peptidylproline (omega=180) = [protein]-peptidylproline (omega=0). Functionally, involved in protein export. Acts as a chaperone by maintaining the newly synthesized protein in an open conformation. Functions as a peptidyl-prolyl cis-trans isomerase. The sequence is that of Trigger factor from Nitratiruptor sp. (strain SB155-2).